Consider the following 217-residue polypeptide: Ribonuclease HII (217 aa).

The RNase H type-2 domain maps to 16–217 (YCIAGVDEVG…VARVLGTYHD (202 aa)). Residues aspartate 22, glutamate 23, and aspartate 114 each contribute to the a divalent metal cation site.

The protein belongs to the RNase HII family. Requires Mn(2+) as cofactor. It depends on Mg(2+) as a cofactor.

Its subcellular location is the cytoplasm. The enzyme catalyses Endonucleolytic cleavage to 5'-phosphomonoester.. Functionally, endonuclease that specifically degrades the RNA of RNA-DNA hybrids. This is Ribonuclease HII from Colwellia psychrerythraea (strain 34H / ATCC BAA-681) (Vibrio psychroerythus).